The sequence spans 342 residues: MSAFTPASEVLLRHSDDFEQSRILFAGDLQDDLPARFECAASRAYTQQFHHWQALSRQMGDNVRFSLVAQASDVADCDTLIYYWPKNKPEAQFQLMNILSLMSVGSDVFVVGENRSGVRSAEPMLADYAPLNKVDSARRCGLYHGRLEKQPQFSLESWWAEYNIDGLTIKTLPGVFSRDGLDVGSQLLLSTLTPHTKGKVLDVGCGAGVLSAALASHSPKVRLTLCDVSAPAVEASRATLAANGLEGEVFASNVFSEVKGRFDMIISNPPFHDGMQTSLDAAQTLIRGAVRHLNSGGELRIVANAFLPYPKILDETFGFHEVIAQTGRFKVYRTVMTRQAKK.

This sequence belongs to the methyltransferase superfamily. RsmC family. In terms of assembly, monomer.

It localises to the cytoplasm. It carries out the reaction guanosine(1207) in 16S rRNA + S-adenosyl-L-methionine = N(2)-methylguanosine(1207) in 16S rRNA + S-adenosyl-L-homocysteine + H(+). Functionally, specifically methylates the guanine in position 1207 of 16S rRNA in the 30S particle. The sequence is that of Ribosomal RNA small subunit methyltransferase C from Salmonella paratyphi A (strain ATCC 9150 / SARB42).